A 609-amino-acid chain; its full sequence is MEEEEGADDGEQGEEEVLVVNVGSTYPCKRSDGSQHDAEIVKVRYNKQAGREEYYAHYVGLNRRQNEWVDKSRLVLTKPPKEGETNGTDQEVTDTAEQPDSKTPQKRKIEEPEPEPKKAKVEEKDASKNASSLGAAGDFAEELTCPLCVELFKDPVMVACGHNFCRSCIDKAWEGQSSFACPECRESITDRKYTINRVLANLAKKAACTPVTPVEKKTRPLEKCSEHDERLKLYCKDDGTLSCVICRDSLKHASHNFLPILDAVGVYREELSAIVAPLEASLKVTEQLSSEQSDKIEQHNKNMSQYKEHITSEFEKLHKFLREREEKLLEQLKEQGENLLTEMENNLVKMQESQDAIKKTISLAKERMEDTDSISFLMDIKAFIDKCQEQQRAVISTGNTLLSKELCQGTFKGPIQYIMWKELKSVVIPSLTPMLLDPTSAHPNLHLSDGLTSVRYGENKLSLPDNPKRFSQCILVLGSQGFDSGRHYWEVEVGDKTAWDVGMASESSNRKGKIKLNPKNGYWAIWLRNGNAYKALESPSKSLSLSSHPRKIGVYVDYEGGQISFYNADDMTIIYTFNATFTEKLYPYLSPFLHDSGKNVDPLRFVHNK.

Residues 21 to 75 (NVGSTYPCKRSDGSQHDAEIVKVRYNKQAGREEYYAHYVGLNRRQNEWVDKSRLV) form the Tudor-knot domain. The segment covering 74 to 84 (LVLTKPPKEGE) has biased composition (basic and acidic residues). The disordered stretch occupies residues 74–129 (LVLTKPPKEGETNGTDQEVTDTAEQPDSKTPQKRKIEEPEPEPKKAKVEEKDASKN). Residues 85 to 102 (TNGTDQEVTDTAEQPDSK) show a composition bias toward polar residues. Thr103 is subject to Phosphothreonine; by CDK1. The segment covering 107-127 (RKIEEPEPEPKKAKVEEKDAS) has biased composition (basic and acidic residues). The RING-type zinc finger occupies 145-185 (CPLCVELFKDPVMVACGHNFCRSCIDKAWEGQSSFACPECR). The B box-type zinc-finger motif lies at 219-260 (RPLEKCSEHDERLKLYCKDDGTLSCVICRDSLKHASHNFLPI). Residues Cys224, His227, Cys246, and His252 each coordinate Zn(2+). Positions 278–371 (LEASLKVTEQ…SLAKERMEDT (94 aa)) form a coiled coil. The B30.2/SPRY domain maps to 413-609 (GPIQYIMWKE…VDPLRFVHNK (197 aa)).

As to quaternary structure, monomer. Post-translationally, threonine (predominantly) and serine residues are phosphorylated during oocyte maturation, when CDK1 is active. In terms of tissue distribution, at the neurula stage, high expression in dorsal embryo region including neural folds and somites. Also high expression in adult brain (CNS) and low expression in oocytes.

Its subcellular location is the nucleus. Transcription factor that determines dorsal-ventral body axis. The polypeptide is Nuclear factor 7, brain (Xenopus laevis (African clawed frog)).